Here is a 731-residue protein sequence, read N- to C-terminus: Inducible ornithine decarboxylase (731 aa).

Lysine 356 carries the N6-(pyridoxal phosphate)lysine modification.

Belongs to the Orn/Lys/Arg decarboxylase class-I family. Dodecamer. The cofactor is pyridoxal 5'-phosphate.

It carries out the reaction L-ornithine + H(+) = putrescine + CO2. This chain is Inducible ornithine decarboxylase (odcI), found in Lactobacillus sp. (strain 30a).